A 593-amino-acid polypeptide reads, in one-letter code: NADH-quinone oxidoreductase subunit C/D 1 (593 aa).

Residues 1–193 (MPWAKEGDLQ…DNLEGLMNYD (193 aa)) are NADH dehydrogenase I subunit C. Positions 217-593 (AQIVLNWGPL…IDPVVGETDR (377 aa)) are NADH dehydrogenase I subunit D.

It in the N-terminal section; belongs to the complex I 30 kDa subunit family. In the C-terminal section; belongs to the complex I 49 kDa subunit family. In terms of assembly, NDH-1 is composed of 13 different subunits. Subunits NuoB, CD, E, F, and G constitute the peripheral sector of the complex.

It localises to the cell inner membrane. The catalysed reaction is a quinone + NADH + 5 H(+)(in) = a quinol + NAD(+) + 4 H(+)(out). In terms of biological role, NDH-1 shuttles electrons from NADH, via FMN and iron-sulfur (Fe-S) centers, to quinones in the respiratory chain. The immediate electron acceptor for the enzyme in this species is believed to be ubiquinone. Couples the redox reaction to proton translocation (for every two electrons transferred, four hydrogen ions are translocated across the cytoplasmic membrane), and thus conserves the redox energy in a proton gradient. The polypeptide is NADH-quinone oxidoreductase subunit C/D 1 (nuoC1) (Aquifex aeolicus (strain VF5)).